A 448-amino-acid polypeptide reads, in one-letter code: Methionine aminopeptidase 2-1 (448 aa).

The tract at residues 1–90 (MAAQASEKLE…PPRVPVSSLF (90 aa)) is disordered. Over residues 22-33 (AAGPAKAGQADA) the composition is skewed to low complexity. A compositionally biased stretch (acidic residues) spans 34–46 (GEVEDESDDDADD). A compositionally biased stretch (low complexity) spans 47–58 (AGAAADGAANGA). The span at 59-74 (AKKKKKRKSKKKKKGG) shows a compositional bias: basic residues. Residues 75-88 (AKVQSSPPRVPVSS) show a composition bias toward low complexity. Residue His198 coordinates substrate. Residues Asp218, Asp229, and His301 each coordinate a divalent metal cation. Substrate is bound at residue His309. A divalent metal cation is bound by residues Glu334 and Glu429.

Belongs to the peptidase M24A family. Methionine aminopeptidase eukaryotic type 2 subfamily. Requires Co(2+) as cofactor. Zn(2+) serves as cofactor. Mn(2+) is required as a cofactor. The cofactor is Fe(2+).

It is found in the cytoplasm. It catalyses the reaction Release of N-terminal amino acids, preferentially methionine, from peptides and arylamides.. Functionally, cotranslationally removes the N-terminal methionine from nascent proteins. The N-terminal methionine is often cleaved when the second residue in the primary sequence is small and uncharged (Met-Ala-, Cys, Gly, Pro, Ser, Thr, or Val). In Emericella nidulans (strain FGSC A4 / ATCC 38163 / CBS 112.46 / NRRL 194 / M139) (Aspergillus nidulans), this protein is Methionine aminopeptidase 2-1.